The chain runs to 391 residues: Formate-dependent phosphoribosylglycinamide formyltransferase (391 aa).

N(1)-(5-phospho-beta-D-ribosyl)glycinamide contacts are provided by residues 20–21 (EL) and Glu80. Residues Arg112, Lys153, 158–163 (SSGKGQ), 193–196 (EGFI), and Glu201 each bind ATP. The ATP-grasp domain maps to 117–306 (RLAAEELDLS…EFALHVRAFT (190 aa)). The Mg(2+) site is built by Glu265 and Glu277. N(1)-(5-phospho-beta-D-ribosyl)glycinamide-binding positions include Asp284, Lys354, and 361–362 (RR).

Belongs to the PurK/PurT family. Homodimer.

It carries out the reaction N(1)-(5-phospho-beta-D-ribosyl)glycinamide + formate + ATP = N(2)-formyl-N(1)-(5-phospho-beta-D-ribosyl)glycinamide + ADP + phosphate + H(+). Its pathway is purine metabolism; IMP biosynthesis via de novo pathway; N(2)-formyl-N(1)-(5-phospho-D-ribosyl)glycinamide from N(1)-(5-phospho-D-ribosyl)glycinamide (formate route): step 1/1. In terms of biological role, involved in the de novo purine biosynthesis. Catalyzes the transfer of formate to 5-phospho-ribosyl-glycinamide (GAR), producing 5-phospho-ribosyl-N-formylglycinamide (FGAR). Formate is provided by PurU via hydrolysis of 10-formyl-tetrahydrofolate. This Vibrio parahaemolyticus serotype O3:K6 (strain RIMD 2210633) protein is Formate-dependent phosphoribosylglycinamide formyltransferase.